A 308-amino-acid chain; its full sequence is tRNA dimethylallyltransferase (308 aa).

10-17 (GPTASGKT) serves as a coordination point for ATP. 12 to 17 (TASGKT) contributes to the substrate binding site. Interaction with substrate tRNA regions lie at residues 35–38 (DSSL) and 159–163 (QRIFR).

It belongs to the IPP transferase family. In terms of assembly, monomer. It depends on Mg(2+) as a cofactor.

The catalysed reaction is adenosine(37) in tRNA + dimethylallyl diphosphate = N(6)-dimethylallyladenosine(37) in tRNA + diphosphate. Functionally, catalyzes the transfer of a dimethylallyl group onto the adenine at position 37 in tRNAs that read codons beginning with uridine, leading to the formation of N6-(dimethylallyl)adenosine (i(6)A). This is tRNA dimethylallyltransferase from Francisella tularensis subsp. novicida (strain U112).